We begin with the raw amino-acid sequence, 185 residues long: ATP synthase subunit b, cyanelle (185 aa).

The chain crosses the membrane as a helical span at residues 36-58 (LINLLVIFFLLIYQGRPFFTALL).

The protein belongs to the ATPase B chain family. As to quaternary structure, F-type ATPases have 2 components, F(1) - the catalytic core - and F(0) - the membrane proton channel. F(1) has five subunits: alpha(3), beta(3), gamma(1), delta(1), epsilon(1). F(0) has four main subunits: a(1), b(1), b'(1) and c(10-14). The alpha and beta chains form an alternating ring which encloses part of the gamma chain. F(1) is attached to F(0) by a central stalk formed by the gamma and epsilon chains, while a peripheral stalk is formed by the delta, b and b' chains.

It is found in the plastid. It localises to the cyanelle thylakoid membrane. Its function is as follows. F(1)F(0) ATP synthase produces ATP from ADP in the presence of a proton or sodium gradient. F-type ATPases consist of two structural domains, F(1) containing the extramembraneous catalytic core and F(0) containing the membrane proton channel, linked together by a central stalk and a peripheral stalk. During catalysis, ATP synthesis in the catalytic domain of F(1) is coupled via a rotary mechanism of the central stalk subunits to proton translocation. Component of the F(0) channel, it forms part of the peripheral stalk, linking F(1) to F(0). The sequence is that of ATP synthase subunit b, cyanelle from Cyanophora paradoxa.